A 167-amino-acid chain; its full sequence is Protein archease (167 aa).

Ala2 bears the N-acetylalanine mark. Residues Asp39, Asp166, and Ile167 each contribute to the Ca(2+) site.

This sequence belongs to the archease family. As to quaternary structure, component of the tRNA-splicing ligase complex.

Its function is as follows. Component of the tRNA-splicing ligase complex required to facilitate the enzymatic turnover of catalytic subunit RTCB. Together with DDX1, acts by facilitating the guanylylation of RTCB, a key intermediate step in tRNA ligation. This is Protein archease (ZBTB8OS) from Homo sapiens (Human).